The sequence spans 185 residues: Ribosome-recycling factor (185 aa).

The protein belongs to the RRF family.

The protein localises to the cytoplasm. Responsible for the release of ribosomes from messenger RNA at the termination of protein biosynthesis. May increase the efficiency of translation by recycling ribosomes from one round of translation to another. The polypeptide is Ribosome-recycling factor (Shewanella sp. (strain W3-18-1)).